The chain runs to 37 residues: U1-ectatotoxin-Eb1a subunit B (37 aa).

Belongs to the ectatomin family. Ectatomin-Eq subfamily. Heterodimer of subunits A and B; disulfide-linked. As to expression, expressed by the venom gland.

It is found in the secreted. It localises to the target cell membrane. The sequence is that of U1-ectatotoxin-Eb1a subunit B from Ectatomma brunneum (Ant).